The sequence spans 158 residues: N5-carboxyaminoimidazole ribonucleotide mutase (158 aa).

S10, D13, and R40 together coordinate substrate.

Belongs to the AIR carboxylase family. Class I subfamily.

It carries out the reaction 5-carboxyamino-1-(5-phospho-D-ribosyl)imidazole + H(+) = 5-amino-1-(5-phospho-D-ribosyl)imidazole-4-carboxylate. It participates in purine metabolism; IMP biosynthesis via de novo pathway; 5-amino-1-(5-phospho-D-ribosyl)imidazole-4-carboxylate from 5-amino-1-(5-phospho-D-ribosyl)imidazole (N5-CAIR route): step 2/2. Functionally, catalyzes the conversion of N5-carboxyaminoimidazole ribonucleotide (N5-CAIR) to 4-carboxy-5-aminoimidazole ribonucleotide (CAIR). The chain is N5-carboxyaminoimidazole ribonucleotide mutase from Saccharolobus solfataricus (strain ATCC 35092 / DSM 1617 / JCM 11322 / P2) (Sulfolobus solfataricus).